A 313-amino-acid chain; its full sequence is PGR5-like protein 1B, chloroplastic (313 aa).

The transit peptide at 1–49 (MAFTLTIPRFSAISRKPITCSSSRTQCPAPFTHGRSISLRRRLTLLPLK) directs the protein to the chloroplast. N-acetylalanine is present on A50. Residues 50 to 187 (ASTDQSGQVG…KVYSDLAIDY (138 aa)) are Stromal-facing. The cysteines at positions 71 and 172 are disulfide-linked. A helical membrane pass occupies residues 188 to 208 (FKMFLLNVPATVVALGLFFFL). Residues 209–225 (DDITGFEITYLLELPEP) are Lumenal, thylakoid-facing. The chain crosses the membrane as a helical span at residues 226–246 (FSFIFTWFAAVPAIVYLALSL). Residues 247 to 313 (TKLILKDFLI…LITLPEGGKA (67 aa)) are Stromal-facing.

Belongs to the PGR5 family. In terms of assembly, homodimer and heterodimer with PGR5. Interacts with PGR5, FD2, psaD1, LFNR1 and LFNR2. Also interacts with petC and a Fe-containing cofactor (FCC). Disulfide bonds; Cys-289 and Cys-292 are probably involved in the formation of disulfide bridges with 'Cys-11' and 'Cys-105' of PGR5 while Cys-261 and Cys-264 are probably involved in the binding of a Fe-containing cofactor (FCC).

The protein resides in the plastid. It is found in the chloroplast thylakoid membrane. With respect to regulation, inhibited by antimycin A. Its function is as follows. Ferredoxin-plastoquinone reductase involved in cyclic electron flow (CEF) around photosystem I. The homodimer is probably not involved in CEF. The sequence is that of PGR5-like protein 1B, chloroplastic (PGRL1B) from Arabidopsis thaliana (Mouse-ear cress).